Consider the following 518-residue polypeptide: Glutamate--cysteine ligase (518 aa).

Belongs to the glutamate--cysteine ligase type 1 family. Type 1 subfamily.

The enzyme catalyses L-cysteine + L-glutamate + ATP = gamma-L-glutamyl-L-cysteine + ADP + phosphate + H(+). Its pathway is sulfur metabolism; glutathione biosynthesis; glutathione from L-cysteine and L-glutamate: step 1/2. The protein is Glutamate--cysteine ligase of Escherichia coli O7:K1 (strain IAI39 / ExPEC).